The sequence spans 610 residues: All-trans-retinol 13,14-reductase (610 aa).

The first 18 residues, 1 to 18 (MWLPLVLLLAVLLLAVLC), serve as a signal peptide directing secretion.

It belongs to the carotenoid/retinoid oxidoreductase family. CrtISO subfamily. NAD(+) serves as cofactor. NADP(+) is required as a cofactor. Requires FAD as cofactor. In terms of tissue distribution, expressed in liver; expression positively correlates with obesity and liver steatosis. Expressed in adipose tissue; expression tends to be decreased in obese versus lean individuals.

Its subcellular location is the endoplasmic reticulum membrane. It catalyses the reaction all-trans-13,14-dihydroretinol + A = all-trans-retinol + AH2. In terms of biological role, catalyzes the saturation of all-trans-retinol to all-trans-13,14-dihydroretinol. Does not exhibit any activity toward all-trans-retinoic acid, nor 9-cis, 11-cis or 13-cis-retinol isomers. May play a role in the metabolism of vitamin A. Independently of retinol conversion, may regulate liver metabolism upstream of MLXIPL/ChREBP. May play a role in adipocyte differentiation. The sequence is that of All-trans-retinol 13,14-reductase (RETSAT) from Homo sapiens (Human).